A 390-amino-acid polypeptide reads, in one-letter code: Protein phosphatase 1B (390 aa).

Positions 1–14 (MGAFLDKPKTEKHN) are enriched in basic and acidic residues. Positions 1-20 (MGAFLDKPKTEKHNAHGAGN) are disordered. Gly-2 carries N-myristoyl glycine lipidation. Lys-12 is covalently cross-linked (Glycyl lysine isopeptide (Lys-Gly) (interchain with G-Cter in ISG15)). The region spanning 23–295 (RYGLSSMQGW…DNMSVVLVCF (273 aa)) is the PPM-type phosphatase domain. Residues Asp-60, Gly-61, Asp-243, and Asp-286 each contribute to the Mn(2+) site. Positions 371 to 390 (NPHKDNDGGAGDLEDSLVAL) are disordered. Phosphoserine is present on Ser-386.

This sequence belongs to the PP2C family. As to quaternary structure, monomer. Interacts with PAK6. Interacts with the phosphorylated form of IKBKB/IKKB. The cofactor is Mg(2+). Requires Mn(2+) as cofactor. In terms of processing, isgylation negatively regulates its activity. N-myristoylation is essential for the recognition of its substrates for dephosphorylation. In terms of tissue distribution, isoform 1: Expressed ubiquitously. Isoform 2: Expressed exclusively in testis and intestine. Isoform 3: Expressed exclusively in brain and intestine. Isoform 4: Expressed exclusively in testis and intestine.

Its subcellular location is the cytoplasm. The protein resides in the cytosol. It localises to the membrane. The enzyme catalyses O-phospho-L-seryl-[protein] + H2O = L-seryl-[protein] + phosphate. The catalysed reaction is O-phospho-L-threonyl-[protein] + H2O = L-threonyl-[protein] + phosphate. Its function is as follows. Enzyme with a broad specificity. Dephosphorylates PRKAA1 and PRKAA2. Inhibits TBK1-mediated antiviral signaling by dephosphorylating it at 'Ser-172'. Plays an important role in the termination of TNF-alpha-mediated NF-kappa-B activation through dephosphorylating and inactivating IKBKB/IKKB. The polypeptide is Protein phosphatase 1B (Ppm1b) (Mus musculus (Mouse)).